Here is a 129-residue protein sequence, read N- to C-terminus: uncharacterized protein (129 aa).

Its subcellular location is the cytoplasm. The protein resides in the cytosol. It localises to the nucleus. This is an uncharacterized protein from Schizosaccharomyces pombe (strain 972 / ATCC 24843) (Fission yeast).